The sequence spans 338 residues: tRNA N6-adenosine threonylcarbamoyltransferase (338 aa).

2 residues coordinate Fe cation: histidine 111 and histidine 115. Residues 134–138, aspartate 167, glycine 180, aspartate 184, and asparagine 272 contribute to the substrate site; that span reads VVSGG. Aspartate 300 is a binding site for Fe cation.

The protein belongs to the KAE1 / TsaD family. Requires Fe(2+) as cofactor.

It is found in the cytoplasm. It carries out the reaction L-threonylcarbamoyladenylate + adenosine(37) in tRNA = N(6)-L-threonylcarbamoyladenosine(37) in tRNA + AMP + H(+). Functionally, required for the formation of a threonylcarbamoyl group on adenosine at position 37 (t(6)A37) in tRNAs that read codons beginning with adenine. Is involved in the transfer of the threonylcarbamoyl moiety of threonylcarbamoyl-AMP (TC-AMP) to the N6 group of A37, together with TsaE and TsaB. TsaD likely plays a direct catalytic role in this reaction. This is tRNA N6-adenosine threonylcarbamoyltransferase from Syntrophus aciditrophicus (strain SB).